A 693-amino-acid polypeptide reads, in one-letter code: Iron-sulfur clusters transporter atm1, mitochondrial (693 aa).

Residues 1 to 28 (MLERCPWKLISSPRNIPARSFLNSRGTY) constitute a mitochondrion transit peptide. Residues 29 to 118 (LVLRKSNILP…PKGKTNLKVR (90 aa)) lie on the Mitochondrial matrix side of the membrane. A helical membrane pass occupies residues 119–140 (VVSALALLVAAKILNVQVPFYF). An ABC transmembrane type-1 domain is found at 119 to 409 (VVSALALLVA…LGSVYREMRQ (291 aa)). Over 141–163 (KSIIDTMNTTLVQEVGALWSTVG) the chain is Mitochondrial intermembrane. Residues 164–187 (AVVLGYGFARIFSTVFQELRNSVF) form a helical membrane-spanning segment. Residues 188 to 236 (AIVSQSAIRSVSSNVYQHLLNLDMNFHLSKQTGSITRAMDRGTKGISFI) lie on the Mitochondrial matrix side of the membrane. A helical membrane pass occupies residues 237-260 (LSSMVLHIIPITLEIAMVSGILTY). Residue lysine 261 is a topological domain, mitochondrial intermembrane. Residues 262 to 282 (YGPSFSAIAATTVALYALFTV) form a helical membrane-spanning segment. Residues 283–348 (RTTSWRTVFR…ANVKVASSLA (66 aa)) are Mitochondrial matrix-facing. Residues 288 to 292 (RTVFR) and 351 to 354 (NSGQ) contribute to the glutathione site. The chain crosses the membrane as a helical span at residues 349 to 367 (FLNSGQAIIFSTALTLMMY). The Mitochondrial intermembrane portion of the chain corresponds to 368–382 (MGCRGIVTSNLTVGD). A helical transmembrane segment spans residues 383–404 (LVMINQLVFQLSIPLNFLGSVY). Glutathione is bound at residue glycine 401. At 405 to 693 (REMRQAFTDM…FGESNKSGDA (289 aa)) the chain is on the mitochondrial matrix side. In terms of domain architecture, ABC transporter spans 443–679 (IQFDNVHFSY…NSVYTSMWHS (237 aa)). ATP contacts are provided by residues tyrosine 452 and 476-487 (GASGCGKSTILR).

It belongs to the ABC transporter superfamily. ABCB family. Heavy Metal importer (TC 3.A.1.210) subfamily. In terms of assembly, homodimer.

The protein resides in the mitochondrion inner membrane. In terms of biological role, performs an essential function in the generation of cytoplasmic iron-sulfur proteins by mediating the ATP-dependent export of Fe/S cluster precursors synthesized by nfs1 and other mitochondrial proteins. Hydrolyzes ATP. Binds glutathione and may function by transporting a glutathione-conjugated iron-sulfur compound. This Schizosaccharomyces pombe (strain 972 / ATCC 24843) (Fission yeast) protein is Iron-sulfur clusters transporter atm1, mitochondrial.